The following is a 33-amino-acid chain: Cecropin-C (33 aa).

Residue K21 is modified to 5-hydroxylysine.

Monomer. Hemolymph.

The protein resides in the secreted. Its function is as follows. Cecropins have lytic and antibacterial activity against several Gram-positive and Gram-negative bacteria. Also has activity against fungi. This Heliothis virescens (Tobacco budworm moth) protein is Cecropin-C.